We begin with the raw amino-acid sequence, 291 residues long: MSIKNIFSKKKKYASVPSEQASQDVPEGIMTKCPQCKKIMLTKELDKNLRVCMNCGRHLQMNAKQRIDSLVDEGTFEEFNGHLISENPLGFPGYEEKLEKDREKTSLNEAIVTGQGEIEGKRAVIAVMDATFRMGSMGSVVGEKITLAIEKAKADKVPFIIFTASGGARMQEGILSLMQMAKTSSALKLFSEDQGLIISVMTNPTTGGVSASFASLGDYNFAEPGALIGFAGRRIIEQTIREDLPEDFQTAEFLLKHGQLDAVIHRAEMKETLGRILALHSTGGEREWLEN.

Positions I29–N291 constitute a CoA carboxyltransferase N-terminal domain. Zn(2+)-binding residues include C33, C36, C52, and C55. The C4-type zinc finger occupies C33–C55.

The protein belongs to the AccD/PCCB family. Acetyl-CoA carboxylase is a heterohexamer composed of biotin carboxyl carrier protein (AccB), biotin carboxylase (AccC) and two subunits each of ACCase subunit alpha (AccA) and ACCase subunit beta (AccD). It depends on Zn(2+) as a cofactor.

The protein resides in the cytoplasm. The enzyme catalyses N(6)-carboxybiotinyl-L-lysyl-[protein] + acetyl-CoA = N(6)-biotinyl-L-lysyl-[protein] + malonyl-CoA. It functions in the pathway lipid metabolism; malonyl-CoA biosynthesis; malonyl-CoA from acetyl-CoA: step 1/1. Component of the acetyl coenzyme A carboxylase (ACC) complex. Biotin carboxylase (BC) catalyzes the carboxylation of biotin on its carrier protein (BCCP) and then the CO(2) group is transferred by the transcarboxylase to acetyl-CoA to form malonyl-CoA. This is Acetyl-coenzyme A carboxylase carboxyl transferase subunit beta from Bacillus pumilus (strain SAFR-032).